The primary structure comprises 175 residues: MEATIFEKRRSSLSSIAVHKQSYSITKSKPKIRIIHIFAPEIIKTDVANFRELVQSLTGKPDDQRTSKAKPRRDMHRLHRQVQDMINTEKLREPEHCDQEFCLNAEELSMTWNGNNGAGESSGGFLNGLGDFEGFIQELGEFPYLPLSSIDASASSNSSSSSHLHGGSVFSDQFA.

The VQ motif lies at 50–59; that stretch reads FRELVQSLTG.

The protein resides in the nucleus. In terms of biological role, may function as negative regulator of plant defense. The chain is VQ motif-containing protein 25 from Arabidopsis thaliana (Mouse-ear cress).